Here is a 31-residue protein sequence, read N- to C-terminus: Cytochrome b6-f complex subunit 6 (31 aa).

The helical transmembrane segment at 4–26 (ITSYFGFLLAALTITSALLIGLN) threads the bilayer.

Belongs to the PetL family. The 4 large subunits of the cytochrome b6-f complex are cytochrome b6, subunit IV (17 kDa polypeptide, PetD), cytochrome f and the Rieske protein, while the 4 small subunits are PetG, PetL, PetM and PetN. The complex functions as a dimer.

The protein localises to the plastid. The protein resides in the chloroplast thylakoid membrane. Functionally, component of the cytochrome b6-f complex, which mediates electron transfer between photosystem II (PSII) and photosystem I (PSI), cyclic electron flow around PSI, and state transitions. PetL is important for photoautotrophic growth as well as for electron transfer efficiency and stability of the cytochrome b6-f complex. The sequence is that of Cytochrome b6-f complex subunit 6 from Amborella trichopoda.